Reading from the N-terminus, the 784-residue chain is Toll-like receptor 2 (784 aa).

An N-terminal signal peptide occupies residues 1–20 (MPHTLWMVWVLGVIISLSKE). Over 21–587 (ESSNQASLSC…VRLSVSECHR (567 aa)) the chain is Extracellular. Residues C30 and C36 are joined by a disulfide bond. LRR repeat units follow at residues 54–77 (VKSLDLSNNRITYISNSDLQRCVN), 78–101 (LQALVLTSNGINTIEEDSFSSLGS), 102–125 (LEHLDLSYNYLSNLSSSWFKPLSS), 126–150 (LTFLNLLGNPYKTLGETSLFSHLTK), 151–175 (LQILRVGNMDTFTKIQRKDFAGLTF), 176–199 (LEELEIDASDLQSYEPKSLKSIQN), 200–223 (VSHLILHMKQHILLLEIFVDVTSS), 224–250 (VECLELRDTDLDTFHFSELSTGETNSL), 251–278 (IKKFTFRNVKITDESLFQVMKLLNQISG), 279–308 (LLELEFDDCTLNGVGNFRASDNDRVIDPGK), 309–337 (VETLTIRRLHIPRFYLFYDLSTLYSLTER), 338–361 (VKRITVENSKVFLVPCLLSQHLKS), 362–388 (LEYLDLSENLMVEEYLKNSACEDAWPS), 389–414 (LQTLILRQNHLASLEKTGETLLTLKN), 415–437 (LTNVDISKNSFHSMPETCQWPEK), 438–457 (MKYLNLSSTRIHSVTGCIPK), 458–478 (TLEILDVSNNNLNLFSLNLPQ), 479–500 (LKELYISRNKLMTLPDASLLPM), and 501–524 (LLVLKISRNAITTFSKEQLDSFHT). A glycan (N-linked (GlcNAc...) asparagine) is linked at N114. N199 is a glycosylation site (N-linked (GlcNAc...) asparagine). A disulfide bridge links C353 with C382. A glycan (N-linked (GlcNAc...) asparagine) is linked at N414. The cysteines at positions 432 and 454 are disulfide-linked. N442 carries N-linked (GlcNAc...) asparagine glycosylation. In terms of domain architecture, LRRCT spans 525–579 (LKTLEAGGNNFICSCEFLSFTQEQQALAKVLIDWPANYLCDSPSHVRGQQVQDVR). Residues 588-608 (TALVSGMCCALFLLILLTGVL) traverse the membrane as a helical segment. Residues 609-784 (CHRFHGLWYM…WVNLRAAIKS (176 aa)) are Cytoplasmic-facing. The 144-residue stretch at 639–782 (ICYDAFVSYS…GFWVNLRAAI (144 aa)) folds into the TIR domain. Residue K754 forms a Glycyl lysine isopeptide (Lys-Gly) (interchain with G-Cter in ubiquitin) linkage. Residues 761-778 (YLEWPMDEAQREGFWVNL) carry the ATG16L1-binding motif motif.

This sequence belongs to the Toll-like receptor family. In terms of assembly, interacts with LY96, TLR1 and TLR6 (via extracellular domain). TLR2 seems to exist in heterodimers with either TLR1 or TLR6 before stimulation by the ligand. The heterodimers form bigger oligomers in response to their corresponding ligands as well as further heterotypic associations with other receptors such as CD14 and/or CD36. Binds MYD88 (via TIR domain). Interacts with TICAM1. Interacts with CNPY3. Interacts with ATG16L1. Interacts with PPP1R11. Interacts with TICAM2. Interacts with TIRAP. In terms of processing, ubiquitinated at Lys-754 by PPP1R11, leading to its degradation. Deubiquitinated by USP2. Glycosylation of Asn-442 is critical for secretion of the N-terminal ectodomain of TLR2.

The protein localises to the membrane. The protein resides in the cytoplasmic vesicle. It localises to the phagosome membrane. Its subcellular location is the membrane raft. In terms of biological role, cooperates with LY96 to mediate the innate immune response to bacterial lipoproteins and other microbial cell wall components. Cooperates with TLR1 or TLR6 to mediate the innate immune response to bacterial lipoproteins or lipopeptides. Acts via MYD88 and TRAF6, leading to NF-kappa-B activation, cytokine secretion and the inflammatory response. May also promote apoptosis in response to lipoproteins. Forms activation clusters composed of several receptors depending on the ligand, these clusters trigger signaling from the cell surface and subsequently are targeted to the Golgi in a lipid-raft dependent pathway. Forms the cluster TLR2:TLR6:CD14:CD36 in response to diacylated lipopeptides and TLR2:TLR1:CD14 in response to triacylated lipopeptides. The protein is Toll-like receptor 2 (TLR2) of Gorilla gorilla gorilla (Western lowland gorilla).